The following is a 365-amino-acid chain: N5-carboxyaminoimidazole ribonucleotide synthase (365 aa).

ATP-binding positions include Arg93, Lys132, 137–143, 168–171, Glu176, His199, and 249–250; these read GYDGKGQ, EEFV, and NE. The ATP-grasp domain occupies 97–279; sequence KLFLKKHGFP…QFENLLRAIT (183 aa).

The protein belongs to the PurK/PurT family. As to quaternary structure, homodimer.

It catalyses the reaction 5-amino-1-(5-phospho-beta-D-ribosyl)imidazole + hydrogencarbonate + ATP = 5-carboxyamino-1-(5-phospho-D-ribosyl)imidazole + ADP + phosphate + 2 H(+). It participates in purine metabolism; IMP biosynthesis via de novo pathway; 5-amino-1-(5-phospho-D-ribosyl)imidazole-4-carboxylate from 5-amino-1-(5-phospho-D-ribosyl)imidazole (N5-CAIR route): step 1/2. In terms of biological role, catalyzes the ATP-dependent conversion of 5-aminoimidazole ribonucleotide (AIR) and HCO(3)(-) to N5-carboxyaminoimidazole ribonucleotide (N5-CAIR). The protein is N5-carboxyaminoimidazole ribonucleotide synthase of Aquifex aeolicus (strain VF5).